Consider the following 474-residue polypeptide: Homeobox protein PKNOX2 (474 aa).

Positions 1-42 (MMQHASPAPALTMMATQNVPPPPYQDSPQMTATAQPPSKAQA) are disordered. Residues 26–38 (DSPQMTATAQPPS) are compositionally biased toward polar residues. Residues 96-179 (GSECITSASF…MHSDNLLRND (84 aa)) enclose the MEIS N-terminal domain. The homeobox DNA-binding region spans 291–350 (KRGVLPKHATNIMRSWLFQHLMHPYPTEDEKRQIAAQTNLTLLQVNNWFINARRRILQPM). Disordered stretches follow at residues 351–371 (LDAS…QHRP), 385–405 (LQQQ…LDNL), and 423–474 (AAHD…DSLE). The span at 361–371 (KAKKIKSQHRP) shows a compositional bias: basic residues. Positions 429 to 456 (LDGTEEEDEDDMEEEEEEEEELEEEADE) are enriched in acidic residues.

This sequence belongs to the TALE/MEIS homeobox family.

Its subcellular location is the nucleus. This is Homeobox protein PKNOX2 (Pknox2) from Mus musculus (Mouse).